We begin with the raw amino-acid sequence, 446 residues long: Ribosomal protein uS12 methylthiotransferase RimO (446 aa).

An MTTase N-terminal domain is found at 4 to 119 (YKVGMVSLGC…IDKVIKEFIE (116 aa)). [4Fe-4S] cluster is bound by residues C13, C48, C82, C157, C161, and C164. In terms of domain architecture, Radical SAM core spans 143 to 373 (TTQKESAYIR…MLSQEKISND (231 aa)). One can recognise a TRAM domain in the interval 376–442 (KLKVNKKYDI…DYDLIGVVED (67 aa)).

The protein belongs to the methylthiotransferase family. RimO subfamily. It depends on [4Fe-4S] cluster as a cofactor.

Its subcellular location is the cytoplasm. It carries out the reaction L-aspartate(89)-[ribosomal protein uS12]-hydrogen + (sulfur carrier)-SH + AH2 + 2 S-adenosyl-L-methionine = 3-methylsulfanyl-L-aspartate(89)-[ribosomal protein uS12]-hydrogen + (sulfur carrier)-H + 5'-deoxyadenosine + L-methionine + A + S-adenosyl-L-homocysteine + 2 H(+). In terms of biological role, catalyzes the methylthiolation of an aspartic acid residue of ribosomal protein uS12. The sequence is that of Ribosomal protein uS12 methylthiotransferase RimO from Clostridium botulinum (strain Eklund 17B / Type B).